A 445-amino-acid polypeptide reads, in one-letter code: Phosphoglucosamine mutase 1 (445 aa).

The active-site Phosphoserine intermediate is the S102. 4 residues coordinate Mg(2+): S102, D241, D243, and D245. S102 is subject to Phosphoserine.

Belongs to the phosphohexose mutase family. Mg(2+) serves as cofactor. Post-translationally, activated by phosphorylation.

It carries out the reaction alpha-D-glucosamine 1-phosphate = D-glucosamine 6-phosphate. Functionally, catalyzes the conversion of glucosamine-6-phosphate to glucosamine-1-phosphate. In Shewanella sp. (strain MR-4), this protein is Phosphoglucosamine mutase 1.